A 321-amino-acid polypeptide reads, in one-letter code: Biotin synthase (321 aa).

A Radical SAM core domain is found at 37 to 264 (RDMELCTLSS…TSVIRLSAGR (228 aa)). 3 residues coordinate [4Fe-4S] cluster: cysteine 52, cysteine 56, and cysteine 59. [2Fe-2S] cluster is bound by residues cysteine 96, cysteine 127, cysteine 187, and arginine 259.

Belongs to the radical SAM superfamily. Biotin synthase family. Homodimer. The cofactor is [4Fe-4S] cluster. [2Fe-2S] cluster is required as a cofactor.

It carries out the reaction (4R,5S)-dethiobiotin + (sulfur carrier)-SH + 2 reduced [2Fe-2S]-[ferredoxin] + 2 S-adenosyl-L-methionine = (sulfur carrier)-H + biotin + 2 5'-deoxyadenosine + 2 L-methionine + 2 oxidized [2Fe-2S]-[ferredoxin]. It participates in cofactor biosynthesis; biotin biosynthesis; biotin from 7,8-diaminononanoate: step 2/2. Catalyzes the conversion of dethiobiotin (DTB) to biotin by the insertion of a sulfur atom into dethiobiotin via a radical-based mechanism. The chain is Biotin synthase from Coxiella burnetii (strain CbuK_Q154) (Coxiella burnetii (strain Q154)).